Reading from the N-terminus, the 318-residue chain is Aspartate carbamoyltransferase catalytic subunit (318 aa).

2 residues coordinate carbamoyl phosphate: Arg-54 and Thr-55. Lys-82 contacts L-aspartate. Residues Arg-104, His-134, and Gln-137 each contribute to the carbamoyl phosphate site. The L-aspartate site is built by Arg-174 and Arg-230. 2 residues coordinate carbamoyl phosphate: Gly-271 and Pro-272.

It belongs to the aspartate/ornithine carbamoyltransferase superfamily. ATCase family. As to quaternary structure, heterododecamer (2C3:3R2) of six catalytic PyrB chains organized as two trimers (C3), and six regulatory PyrI chains organized as three dimers (R2).

It catalyses the reaction carbamoyl phosphate + L-aspartate = N-carbamoyl-L-aspartate + phosphate + H(+). It functions in the pathway pyrimidine metabolism; UMP biosynthesis via de novo pathway; (S)-dihydroorotate from bicarbonate: step 2/3. In terms of biological role, catalyzes the condensation of carbamoyl phosphate and aspartate to form carbamoyl aspartate and inorganic phosphate, the committed step in the de novo pyrimidine nucleotide biosynthesis pathway. This is Aspartate carbamoyltransferase catalytic subunit from Clavibacter michiganensis subsp. michiganensis (strain NCPPB 382).